The primary structure comprises 160 residues: Phosphopantetheine adenylyltransferase (160 aa).

Substrate is bound at residue Ser9. ATP contacts are provided by residues 9–10 and His17; that span reads SF. Substrate contacts are provided by Lys41, Leu73, and Arg87. ATP is bound by residues 88-90, Glu98, and 123-129; these read GLR and YTFLSSS.

This sequence belongs to the bacterial CoaD family. Homohexamer. Requires Mg(2+) as cofactor.

It localises to the cytoplasm. The enzyme catalyses (R)-4'-phosphopantetheine + ATP + H(+) = 3'-dephospho-CoA + diphosphate. It participates in cofactor biosynthesis; coenzyme A biosynthesis; CoA from (R)-pantothenate: step 4/5. In terms of biological role, reversibly transfers an adenylyl group from ATP to 4'-phosphopantetheine, yielding dephospho-CoA (dPCoA) and pyrophosphate. In Dictyoglomus turgidum (strain DSM 6724 / Z-1310), this protein is Phosphopantetheine adenylyltransferase.